Consider the following 780-residue polypeptide: Neutral ceramidase (780 aa).

At 1 to 12 the chain is on the cytoplasmic side; that stretch reads MAKRTFSNLETF. The helical; Signal-anchor for type II membrane protein transmembrane segment at 13 to 33 threads the bilayer; it reads LIFLLVMMSAITVALLSLLFI. Residues 34-780 lie on the Lumenal side of the membrane; sequence TSGTIENHKD…TSPAFEVVTI (747 aa). Positions 47 to 90 are disordered; that stretch reads HFFSTTQSPPATQGSTAAQRSTATQHSTATQSSTATQTSPVPLT. The segment covering 57 to 85 has biased composition (low complexity); sequence ATQGSTAAQRSTATQHSTATQSSTATQTS. The O-linked (GalNAc...) threonine glycan is linked to Thr-62. O-linked (GalNAc...) serine glycosylation occurs at Ser-67. O-linked (GalNAc...) threonine glycosylation is found at Thr-68 and Thr-70. Ser-73 carries an O-linked (GalNAc...) serine glycan. Residues Thr-74 and Thr-76 are each glycosylated (O-linked (GalNAc...) threonine). O-linked (GalNAc...) serine glycosylation is found at Ser-78 and Ser-79. O-linked (GalNAc...) threonine glycosylation is found at Thr-80, Thr-82, and Thr-84. Asn-98 carries N-linked (GlcNAc...) asparagine glycosylation. Leu-134 serves as a coordination point for Ca(2+). An N-linked (GlcNAc...) asparagine glycan is attached at Asn-151. His-194 contributes to the Zn(2+) binding site. Asn-217 is a glycosylation site (N-linked (GlcNAc...) asparagine). Residue His-303 participates in Zn(2+) binding. Asn-308 carries N-linked (GlcNAc...) asparagine glycosylation. Ser-354 serves as the catalytic Nucleophile. Disulfide bonds link Cys-362–Cys-376 and Cys-369–Cys-384. N-linked (GlcNAc...) asparagine glycans are attached at residues Asn-440 and Asn-468. Residues Cys-448 and Cys-498 are joined by a disulfide bond. Position 540 (Glu-540) interacts with Zn(2+). An N-linked (GlcNAc...) asparagine glycan is attached at Asn-564. Tyr-579 lines the Zn(2+) pocket. Ca(2+)-binding residues include Asp-712, Ser-714, and Thr-717. Asn-730 carries N-linked (GlcNAc...) asparagine glycosylation. The interval 770 to 780 is required for correct folding and localization; it reads GTSPAFEVVTI. O-linked (GalNAc...) threonine glycosylation occurs at Thr-779.

It belongs to the neutral ceramidase family. It depends on Zn(2+) as a cofactor. In terms of processing, proteolytic cleavage of the N-terminus removes the signal-anchor and produces a soluble form of the protein. Post-translationally, N-glycosylated. Required for enzyme activity. O-glycosylated. Required to retain it as a type II membrane protein at the cell surface. In terms of processing, phosphorylated. May prevent ubiquitination and subsequent degradation. Post-translationally, ubiquitinated, leading to its degradation by the proteasome. Ubiquitination is triggered by nitric oxide. As to expression, primarily expressed in intestine. Ubiquitously expressed with higher levels in kidney, skeletal muscle and heart. The ubiquitous expression observed for ASAH2 might be an experimental artifact due to the paralog ASAH2B.

It is found in the cell membrane. Its subcellular location is the membrane raft. The protein resides in the membrane. It localises to the caveola. The protein localises to the golgi apparatus membrane. It is found in the mitochondrion. Its subcellular location is the secreted. The protein resides in the extracellular exosome. It catalyses the reaction an N-acylsphing-4-enine + H2O = sphing-4-enine + a fatty acid. It carries out the reaction N-dodecanoylsphing-4-enine + H2O = dodecanoate + sphing-4-enine. The enzyme catalyses N-hexadecanoylsphing-4-enine + H2O = sphing-4-enine + hexadecanoate. The catalysed reaction is N-octanoylsphing-4-enine + H2O = octanoate + sphing-4-enine. It catalyses the reaction N-(hexanoyl)sphing-4-enine + H2O = hexanoate + sphing-4-enine. It carries out the reaction N-octadecanoylsphing-4-enine + H2O = sphing-4-enine + octadecanoate. The enzyme catalyses N-tetradecanoylsphing-4-enine + H2O = tetradecanoate + sphing-4-enine. The catalysed reaction is N-(9Z-octadecenoyl)-sphing-4-enine + H2O = sphing-4-enine + (9Z)-octadecenoate. It catalyses the reaction N-(15Z-tetracosenoyl)-sphing-4-enine + H2O = (15Z)-tetracosenoate + sphing-4-enine. It carries out the reaction sphinganine + hexadecanoate = N-hexadecanoylsphinganine + H2O. The enzyme catalyses N-(octadecanoyl)-sphinganine + H2O = sphinganine + octadecanoate. Its pathway is lipid metabolism; sphingolipid metabolism. Its activity is regulated as follows. Inhibited by dithiothreitol (DTT) and 2-mercaptoethanol. Activity is mildly stimulated by Ca(2+) and Mg(2+), but is not inhibited by EDTA. Activity is inhibited by millimolar levels of Fe(2+), Zn(2+) and Cu(2+). Inhibited by cholesterol. Plasma membrane ceramidase that hydrolyzes sphingolipid ceramides into sphingosine and free fatty acids at neutral pH. Ceramides, sphingosine, and its phosphorylated form sphingosine-1-phosphate are bioactive lipids that mediate cellular signaling pathways regulating several biological processes including cell proliferation, apoptosis and differentiation. Also catalyzes the reverse reaction allowing the synthesis of ceramides from fatty acids and sphingosine. Together with sphingomyelinase, participates in the production of sphingosine and sphingosine-1-phosphate from the degradation of sphingomyelin, a sphingolipid enriched in the plasma membrane of cells. Also participates in the hydrolysis of ceramides from the extracellular milieu allowing the production of sphingosine-1-phosphate inside and outside cells. This is the case for instance with the digestion of dietary sphingolipids in the intestinal tract. The chain is Neutral ceramidase (ASAH2) from Homo sapiens (Human).